Consider the following 126-residue polypeptide: Large ribosomal subunit protein bL19 (126 aa).

This sequence belongs to the bacterial ribosomal protein bL19 family.

Functionally, this protein is located at the 30S-50S ribosomal subunit interface and may play a role in the structure and function of the aminoacyl-tRNA binding site. The protein is Large ribosomal subunit protein bL19 of Albidiferax ferrireducens (strain ATCC BAA-621 / DSM 15236 / T118) (Rhodoferax ferrireducens).